We begin with the raw amino-acid sequence, 345 residues long: Phosphoribosylformylglycinamidine cyclo-ligase (345 aa).

The protein belongs to the AIR synthase family.

It localises to the cytoplasm. It carries out the reaction 2-formamido-N(1)-(5-O-phospho-beta-D-ribosyl)acetamidine + ATP = 5-amino-1-(5-phospho-beta-D-ribosyl)imidazole + ADP + phosphate + H(+). It functions in the pathway purine metabolism; IMP biosynthesis via de novo pathway; 5-amino-1-(5-phospho-D-ribosyl)imidazole from N(2)-formyl-N(1)-(5-phospho-D-ribosyl)glycinamide: step 2/2. This is Phosphoribosylformylglycinamidine cyclo-ligase from Escherichia coli (strain SE11).